The following is an 862-amino-acid chain: Protein kintoun (862 aa).

Disordered regions lie at residues 208 to 229 (KLLPPLPNVPAPGKTGSERTTK), 564 to 602 (TKREEHGEPECDEKDGSEAEKARTLQKAKRNSRKKKKER), 626 to 670 (GEGA…STMP), and 743 to 854 (RREV…QFKS). A compositionally biased stretch (basic and acidic residues) spans 564–586 (TKREEHGEPECDEKDGSEAEKAR). Residues 587–601 (TLQKAKRNSRKKKKE) are compositionally biased toward basic residues. 2 stretches are compositionally biased toward basic and acidic residues: residues 748–757 (RRADARRMSE) and 766–785 (KDAHHHDDEHCSSSDQHDEK).

Belongs to the PIH1 family. Kintoun subfamily.

The protein localises to the cytoplasm. Its function is as follows. Required for cytoplasmic pre-assembly of axonemal dyneins, thereby playing a central role in motility in cilia and flagella. Involved in pre-assembly of dynein arm complexes in the cytoplasm before intraflagellar transport loads them for the ciliary compartment. This Anopheles gambiae (African malaria mosquito) protein is Protein kintoun.